Consider the following 681-residue polypeptide: T-box-containing protein 2 (681 aa).

Positions 149–323 (LWDQFSRAGT…NNPFAKGFRE (175 aa)) form a DNA-binding region, T-box. 4 disordered regions span residues 316–351 (PFAK…EQRR), 456–489 (GITS…NQSN), 521–558 (PNIN…LIPG), and 589–611 (ESGE…CQSG). Residues 470–489 (NSFTYYNSSSPSSSDSNQSN) show a composition bias toward low complexity. Residues 521–534 (PNINIPNTVETNVH) show a composition bias toward polar residues.

In terms of assembly, monomer. As to expression, differentiating muscle and tailbud tip.

Its subcellular location is the nucleus. Functionally, involved in the transcriptional regulation of genes required for muscle differentiation. Binds to a palindromic site (called T site) and activates gene transcription when bound to such a site. The chain is T-box-containing protein 2 (T2) from Halocynthia roretzi (Sea squirt).